Here is a 536-residue protein sequence, read N- to C-terminus: CTP synthase (536 aa).

An amidoligase domain region spans residues 1-267; it reads MSKFVFVTGG…CKETLNYLEL (267 aa). Serine 13 serves as a coordination point for CTP. Serine 13 is a binding site for UTP. Residues 14-19 and aspartate 71 each bind ATP; that span reads SIGKGI. Aspartate 71 and glutamate 141 together coordinate Mg(2+). CTP contacts are provided by residues 148-150, 188-193, and lysine 224; these read DIE and KTKPTQ. Residues 188-193 and lysine 224 contribute to the UTP site; that span reads KTKPTQ. The Glutamine amidotransferase type-1 domain occupies 292–534; it reads KVALVGKYIE…IKASQDKLTQ (243 aa). Glycine 354 is an L-glutamine binding site. Catalysis depends on cysteine 381, which acts as the Nucleophile; for glutamine hydrolysis. Residues 382-385, glutamate 405, and arginine 462 each bind L-glutamine; that span reads LGMQ. Catalysis depends on residues histidine 507 and glutamate 509.

Belongs to the CTP synthase family. In terms of assembly, homotetramer.

The enzyme catalyses UTP + L-glutamine + ATP + H2O = CTP + L-glutamate + ADP + phosphate + 2 H(+). It carries out the reaction L-glutamine + H2O = L-glutamate + NH4(+). The catalysed reaction is UTP + NH4(+) + ATP = CTP + ADP + phosphate + 2 H(+). It functions in the pathway pyrimidine metabolism; CTP biosynthesis via de novo pathway; CTP from UDP: step 2/2. With respect to regulation, allosterically activated by GTP, when glutamine is the substrate; GTP has no effect on the reaction when ammonia is the substrate. The allosteric effector GTP functions by stabilizing the protein conformation that binds the tetrahedral intermediate(s) formed during glutamine hydrolysis. Inhibited by the product CTP, via allosteric rather than competitive inhibition. In terms of biological role, catalyzes the ATP-dependent amination of UTP to CTP with either L-glutamine or ammonia as the source of nitrogen. Regulates intracellular CTP levels through interactions with the four ribonucleotide triphosphates. This is CTP synthase from Prochlorococcus marinus (strain MIT 9301).